The following is a 443-amino-acid chain: Threonine/serine transporter TdcC (443 aa).

Transmembrane regions (helical) follow at residues 22–42 (TTWTLGLFGTAIGAGVLFFPI), 44–64 (AGFGGLIPILLMLVLAYPIAF), 97–117 (GVVITFLYFFAICPLLWIYGV), 140–160 (FVALFLLLLMAFVIWFGKDLM), 163–183 (VMSYLVWPFIASLVLISLSLI), 207–227 (ILVTVWLGISIMVFSFNFSPI), 259–279 (ASMLMVAVVMFFAFSCLFTLS), 319–339 (ASIIALVAIFKSFFGHYLGTL), 366–386 (ISMIFIMGSTWVVAYANPNIL), 389–409 (IEAMGAPIIASLLCLLPMYAI), and 423–443 (DNVFVTLIGLLTILNIVYKLF).

The protein belongs to the amino acid/polyamine transporter 2 family. SdaC/TdcC subfamily.

It localises to the cell inner membrane. It catalyses the reaction L-threonine(in) + H(+)(in) = L-threonine(out) + H(+)(out). It carries out the reaction L-serine(in) + H(+)(in) = L-serine(out) + H(+)(out). Functionally, involved in the import of threonine and serine into the cell, with the concomitant import of a proton (symport system). The chain is Threonine/serine transporter TdcC from Salmonella paratyphi A (strain ATCC 9150 / SARB42).